A 469-amino-acid polypeptide reads, in one-letter code: Protein HEAT STRESS TOLERANT DWD 1 (469 aa).

The span at 1–15 shows a compositional bias: basic residues; sequence MGRNVKTKAKRKNKK. Disordered regions lie at residues 1-29 and 115-150; these read MGRN…SIPT and DVVP…KTPN. Over residues 124–143 the composition is skewed to acidic residues; the sequence is GEDEDEDDEDDSDSDDDDGD. WD repeat units follow at residues 157–197, 221–261, 267–307, 311–351, 358–398, and 425–464; these read AHHG…NALA, GHKD…WAVD, GHTA…SPAL, AHNA…GGDA, YHKH…DEEE, and QGQK…NTLP.

The protein belongs to the WD repeat RBAP46/RBAP48/MSI1 family. Probable component of CULLIN4 (CUL4) RING ligase (CRL4) complexes. Interacts with DDB1A and DDB1B. Associates with HSP90-1.

It participates in protein modification; protein ubiquitination. In terms of biological role, probable substrate receptor of CRL4 E3 ligase complexes acting as negative regulators of thermotolerance by disturbing the action of HSP90-1 and by preventing the expression of heat-inducible genes (e.g. HSP14.7, HSP21, At2g03020 and WRKY28). The polypeptide is Protein HEAT STRESS TOLERANT DWD 1 (Arabidopsis thaliana (Mouse-ear cress)).